The primary structure comprises 224 residues: MAKSGKKYIQALSKVNKLKSYNIDDAISLLKEIKFVKFDETIDVSVNLNLKKNHTVRETLVLPHQFMKEKRILVFAKGEKAEEAREFGAAYVGDDDLINKIKDGFSDFDVVVATPDMMKDVGKLGPILGKRGLMPNPKTQTITNDLKGTIASLKKGRTEFRANKNGVINFSVGKSSMDSKKIRENYDEFIKELLKRRPSDLKGTFVDSVYVSSTMGPSVKIDFV.

This sequence belongs to the universal ribosomal protein uL1 family. As to quaternary structure, part of the 50S ribosomal subunit.

Its function is as follows. Binds directly to 23S rRNA. The L1 stalk is quite mobile in the ribosome, and is involved in E site tRNA release. Functionally, protein L1 is also a translational repressor protein, it controls the translation of the L11 operon by binding to its mRNA. This Borrelia recurrentis (strain A1) protein is Large ribosomal subunit protein uL1.